Here is a 515-residue protein sequence, read N- to C-terminus: MSTIAAFYGGKSILITGATGFLGKVLMEKLFRTSPDLKVIYILVRPKAGQTLQQRVFQILDSKLFEKVKEVCPNVHEKIRAIYADLNQNDFAISKEDMQELLSCTNIIFHCAATVRFDDTLRHAVQLNVTATRQLLLMASQMPKLEAFIHISTAYSNCNLKHIDEVIYPCPVEPKKIIDSLEWLDDAIIDEITPKLIRDWPNIYTYTKALGEMVVQQESRNLNIAIIRPSIVGATWQEPFPGWVDNINGPNGIIIATGKGFLRAIKATPMAVADVIPVDTVVNLMLAVGWYTAVHRPKSTLVYHITSGNMNPCNWHKMGVQVLATFEKIPFERPFRRPNANFTSNSFTSQYWNAVSHRAPAIIYDCYLRLTGRKPRMTKLMNRLLRTVSMLEYFINRSWEWSTYNTEMLMSELSPEDQRVFNFDVRQLNWLEYIENYVLGVKKYLLKEDMAGIPKAKQRLKRLRNIHYLFNTALFLIAWRLLIARSQMARNVWFFIVSFCYKFLSYFRASSTLKV.

Residues Met-1–Arg-464 lie on the Cytoplasmic side of the membrane. Residues Asn-465–Ala-484 traverse the membrane as a helical segment. The Peroxisomal portion of the chain corresponds to Arg-485–Val-515.

The protein belongs to the fatty acyl-CoA reductase family.

It localises to the peroxisome membrane. It catalyses the reaction a long-chain fatty acyl-CoA + 2 NADPH + 2 H(+) = a long-chain primary fatty alcohol + 2 NADP(+) + CoA. It carries out the reaction a very long-chain fatty acyl-CoA + 2 NADPH + 2 H(+) = a very long-chain primary fatty alcohol + 2 NADP(+) + CoA. The catalysed reaction is an ultra-long-chain fatty acyl-CoA + 2 NADPH + 2 H(+) = an ultra long-chain primary fatty alcohol + 2 NADP(+) + CoA. The enzyme catalyses hexadecanoyl-CoA + 2 NADPH + 2 H(+) = hexadecan-1-ol + 2 NADP(+) + CoA. It catalyses the reaction octadecanoyl-CoA + 2 NADPH + 2 H(+) = octadecan-1-ol + 2 NADP(+) + CoA. It carries out the reaction eicosanoyl-CoA + 2 NADPH + 2 H(+) = eicosan-1-ol + 2 NADP(+) + CoA. The catalysed reaction is docosanoyl-CoA + 2 NADPH + 2 H(+) = docosan-1-ol + 2 NADP(+) + CoA. The enzyme catalyses tetracosanoyl-CoA + 2 NADPH + 2 H(+) = tetracosan-1-ol + 2 NADP(+) + CoA. It catalyses the reaction hexacosanoyl-CoA + 2 NADPH + 2 H(+) = hexacosan-1-ol + 2 NADP(+) + CoA. It carries out the reaction octacosanoyl-CoA + 2 NADPH + 2 H(+) = octacosan-1-ol + 2 NADP(+) + CoA. The catalysed reaction is triacontanoyl-CoA + 2 NADPH + 2 H(+) = triacontan-1-ol + 2 NADP(+) + CoA. The enzyme catalyses 18-methylnonadecanoyl-CoA + 2 NADPH + 2 H(+) = 18-methylnonadecan-1-ol + 2 NADP(+) + CoA. It catalyses the reaction 20-methylheneicosanoyl-CoA + 2 NADPH + 2 H(+) = 20-methylheneicosan-1-ol + 2 NADP(+) + CoA. It carries out the reaction 22-methyltricosanoyl-CoA + 2 NADPH + 2 H(+) = 22-methyltricosan-1-ol + 2 NADP(+) + CoA. The catalysed reaction is 24-methylpentacosanoyl-CoA + 2 NADPH + 2 H(+) = 24-methylpentacosan-1-ol + 2 NADP(+) + CoA. Catalyzes the reduction of saturated but not unsaturated C16 or C18 fatty acyl-CoA to fatty alcohols (FAls). A lower activity can be observed with shorter fatty acyl-CoA substrates. Can produce very long-chain and ultra long-chain FAls, regardless of whether they have a straight or branched chain. Involved in the production of ether lipids/plasmalogens and wax monoesters whose synthesis requires FAls as substrates. In Homo sapiens (Human), this protein is Fatty acyl-CoA reductase 2.